Here is an 889-residue protein sequence, read N- to C-terminus: Coatomer subunit beta' (889 aa).

WD repeat units lie at residues 11 to 41 (NRSDRVKGIDFHPTEPWVLTTLYSGRVELWN), 53 to 83 (VTETPVRAGKFIARKNWIIVGSDDFRIRVFN), 95 to 125 (AHPDYIRSIAVHPTKPYVLSGSDDLTVKLWN), 138 to 169 (GHEHFVMCVAFNPKDPSTFASGCLDRTVKVWS), 182 to 214 (GQERGVNYVDYYPLPDKPYMITASDDLTIKIWD), and 226 to 256 (GHMSNVSFAVFHPTLPIIISGSEDGTLKIWN). The residue at position 326 (S326) is a Phosphoserine. A disordered region spans residues 806–889 (CGAEGLPGSS…AVPEPVEEES (84 aa)). The span at 836 to 864 (DENKEAEVEDSEFKESNSEAVEAEKKEEE) shows a compositional bias: basic and acidic residues. Positions 866–879 (PQQQQSEQQPEQGE) are enriched in low complexity.

Belongs to the WD repeat COPB2 family. Oligomeric complex that consists of at least the alpha, beta, beta', gamma, delta, epsilon and zeta subunits. Interacts with the ESCRT-0 subunit VPS27.

It is found in the cytoplasm. The protein localises to the golgi apparatus membrane. Its subcellular location is the cytoplasmic vesicle. It localises to the COPI-coated vesicle membrane. The coatomer is a cytosolic protein complex that binds to dilysine motifs and reversibly associates with Golgi non-clathrin-coated vesicles, which further mediate biosynthetic protein transport from the ER, via the Golgi up to the trans Golgi network. Coatomer complex is required for budding from Golgi membranes, and is essential for the retrograde Golgi-to-ER transport of dilysine-tagged proteins. This is Coatomer subunit beta' (SEC27) from Saccharomyces cerevisiae (strain ATCC 204508 / S288c) (Baker's yeast).